We begin with the raw amino-acid sequence, 37 residues long: Cytochrome b6-f complex subunit 5 (37 aa).

A helical transmembrane segment spans residues 5–25 (LLFGIVLGLIPVTLTGLFVAA).

The protein belongs to the PetG family. As to quaternary structure, the 4 large subunits of the cytochrome b6-f complex are cytochrome b6, subunit IV (17 kDa polypeptide, PetD), cytochrome f and the Rieske protein, while the 4 small subunits are PetG, PetL, PetM and PetN. The complex functions as a dimer.

Its subcellular location is the plastid. The protein localises to the chloroplast thylakoid membrane. In terms of biological role, component of the cytochrome b6-f complex, which mediates electron transfer between photosystem II (PSII) and photosystem I (PSI), cyclic electron flow around PSI, and state transitions. PetG is required for either the stability or assembly of the cytochrome b6-f complex. The polypeptide is Cytochrome b6-f complex subunit 5 (Guillardia theta (Cryptophyte)).